Consider the following 307-residue polypeptide: Aspartate carbamoyltransferase catalytic subunit (307 aa).

Carbamoyl phosphate contacts are provided by Arg54 and Thr55. Lys83 serves as a coordination point for L-aspartate. Carbamoyl phosphate-binding residues include Arg104, His132, and Gln135. Residues Arg165 and Arg228 each coordinate L-aspartate. Leu267 and Pro268 together coordinate carbamoyl phosphate.

Belongs to the aspartate/ornithine carbamoyltransferase superfamily. ATCase family. Heterododecamer (2C3:3R2) of six catalytic PyrB chains organized as two trimers (C3), and six regulatory PyrI chains organized as three dimers (R2).

The catalysed reaction is carbamoyl phosphate + L-aspartate = N-carbamoyl-L-aspartate + phosphate + H(+). The protein operates within pyrimidine metabolism; UMP biosynthesis via de novo pathway; (S)-dihydroorotate from bicarbonate: step 2/3. Catalyzes the condensation of carbamoyl phosphate and aspartate to form carbamoyl aspartate and inorganic phosphate, the committed step in the de novo pyrimidine nucleotide biosynthesis pathway. This Clostridium botulinum (strain Langeland / NCTC 10281 / Type F) protein is Aspartate carbamoyltransferase catalytic subunit.